A 142-amino-acid chain; its full sequence is Galactose-6-phosphate isomerase subunit LacA (142 aa).

It belongs to the LacAB/RpiB family. In terms of assembly, heteromultimeric protein consisting of LacA and LacB.

It catalyses the reaction aldehydo-D-galactose 6-phosphate = keto-D-tagatose 6-phosphate. The protein operates within carbohydrate metabolism; D-galactose 6-phosphate degradation; D-tagatose 6-phosphate from D-galactose 6-phosphate: step 1/1. The chain is Galactose-6-phosphate isomerase subunit LacA from Enterococcus faecalis (strain ATCC 700802 / V583).